We begin with the raw amino-acid sequence, 438 residues long: Aspartate--tRNA(Asp) ligase (438 aa).

Glu170 is a binding site for L-aspartate. Positions 192–195 are aspartate; it reads QLYK. L-aspartate is bound at residue Arg214. ATP-binding positions include 214-216, 222-224, and Glu361; these read RAE and RHL. Positions 361 and 364 each coordinate Mg(2+). L-aspartate-binding residues include Ser364 and Arg368. 409-412 contributes to the ATP binding site; it reads GAER.

The protein belongs to the class-II aminoacyl-tRNA synthetase family. Type 2 subfamily. As to quaternary structure, homodimer. Mg(2+) serves as cofactor.

Its subcellular location is the cytoplasm. The enzyme catalyses tRNA(Asp) + L-aspartate + ATP = L-aspartyl-tRNA(Asp) + AMP + diphosphate. Functionally, catalyzes the attachment of L-aspartate to tRNA(Asp) in a two-step reaction: L-aspartate is first activated by ATP to form Asp-AMP and then transferred to the acceptor end of tRNA(Asp). This Pyrococcus furiosus (strain ATCC 43587 / DSM 3638 / JCM 8422 / Vc1) protein is Aspartate--tRNA(Asp) ligase.